The primary structure comprises 626 residues: Basic helix-loop-helix ARNT-like protein 1 (626 aa).

The interval 1-60 is disordered; that stretch reads MADQRMDISSTISDFMSPGATDLLSSPLGTSGMDCNRKRKGSSTDYQESMDTDKDDPHGR. S17 carries the phosphoserine; by GSK3-beta modification. T21 is subject to Phosphothreonine; by GSK3-beta. The Nuclear localization signal signature appears at 36-41; that stretch reads NRKRKG. The segment covering 51–60 has biased composition (basic and acidic residues); it reads DTDKDDPHGR. The bHLH domain maps to 72–125; sequence NAREAHSQIEKRRRDKMNSFIDELASLVPTCNAMSRKLDKLTVLRMAVQHMKTL. S78 carries the phosphoserine modification. The residue at position 90 (S90) is a Phosphoserine; by CK2. The short motif at 142-152 is the Nuclear export signal 1 element; that stretch reads LSDDELKHLIL. The 73-residue stretch at 143–215 folds into the PAS 1 domain; sequence SDDELKHLIL…EQLSSSDTAP (73 aa). A Glycyl lysine isopeptide (Lys-Gly) (interchain with G-Cter in SUMO2 and SUMO3) cross-link involves residue K252. A Glycyl lysine isopeptide (Lys-Gly) (interchain with G-Cter in SUMO); alternate cross-link involves residue K259. A Glycyl lysine isopeptide (Lys-Gly) (interchain with G-Cter in SUMO2); alternate cross-link involves residue K259. The PAS 2 domain maps to 326–396; the sequence is PQPVNGEIRV…ECHRQVLQTR (71 aa). Positions 361-369 match the Nuclear export signal 2 motif; that stretch reads LAYLPQELL. In terms of domain architecture, PAC spans 401–444; that stretch reads TNCYKFKIKDGSFITLRSRWFSFMNPWTKEVEYIVSTNTVVLAN. 2 disordered regions span residues 457 to 493 and 510 to 597; these read TASP…AGAG and RGSS…SNDE. Gly residues predominate over residues 484 to 493; sequence IPGGTRAGAG. The interval 508–588 is interaction with CIART; that stretch reads RIRGSSPSSC…IGIDMIDNDQ (81 aa). Residues 511-521 show a composition bias toward low complexity; the sequence is GSSPSSCGSSP. Position 538 is an N6-acetyllysine (K538).

As to quaternary structure, component of the circadian clock oscillator which includes the CRY1/2 proteins, CLOCK or NPAS2, BMAL1 or BMAL2, CSNK1D and/or CSNK1E, TIMELESS and the PER1/2/3 proteins. Forms a heterodimer with CLOCK. The CLOCK-BMAL1 heterodimer is required for E-box-dependent transactivation, for CLOCK nuclear translocation and degradation, and, for phosphorylation of both CLOCK and BMAL1. Part of a nuclear complex which also includes RACK1 and PRKCA; RACK1 and PRKCA are recruited to the complex in a circadian manner. Interacts with NPAS2. Interacts with EZH2. Interacts with SUMO3. Interacts with SIRT1. Interacts with AHR. Interacts with ID1, ID2 and ID3. Interacts with DDX4. Interacts with OGT. Interacts with EED and SUZ12. Interacts with MTA1. Interacts with CIART. Interacts with HSP90. Interacts with KAT2B and EP300. Interacts with BHLHE40/DEC1 and BHLHE41/DEC2. Interacts with RELB and the interaction is enhanced in the presence of CLOCK. Interacts with PER1, PER2, CRY1 and CRY2 and this interaction requires a translocation to the nucleus. Interaction of the CLOCK-BMAL1 heterodimer with PER or CRY inhibits transcription activation. Interaction of the CLOCK-BMAL1 with CRY1 is independent of DNA but with PER2 is off DNA. The CLOCK-BMAL1 heterodimer interacts with GSK3B. Interacts with KDM5A. Interacts with KMT2A; in a circadian manner. Interacts with UBE3A. Interacts with PRKCG. Interacts with MAGEL2. Interacts with NCOA2. Interacts with THRAP3. The CLOCK-BMAL1 heterodimer interacts with PASD1. Interacts with PASD1. Interacts with USP9X. Interacts with PIWIL2 (via PIWI domain). Interacts with HDAC3. Interacts with HNF4A. In terms of processing, ubiquitinated, leading to its proteasomal degradation. Deubiquitinated by USP9X. Post-translationally, O-glycosylated; contains O-GlcNAc. O-glycosylation by OGT prevents protein degradation by inhibiting ubiquitination. It also stabilizes the CLOCK-BMAL1 heterodimer thereby increasing CLOCK-BMAL1-mediated transcription of genes in the negative loop of the circadian clock such as PER1/2/3 and CRY1/2. Acetylated on Lys-538 by CLOCK during the repression phase of the circadian cycle. Acetylation facilitates recruitment of CRY1 protein and initiates the repression phase of the circadian cycle. Acetylated at Lys-538 by KAT5 during the activation phase of the cycle, leading to recruitment of the positive transcription elongation factor b (P-TEFb) and BRD4, followed by productive elongation of circadian transcripts. Deacetylated by SIRT1, which may result in decreased protein stability. In terms of processing, phosphorylated upon dimerization with CLOCK. Phosphorylation enhances the transcriptional activity, alters the subcellular localization and decreases the stability of the CLOCK-BMAL1 heterodimer by promoting its degradation. Phosphorylation shows circadian variations in the liver with a peak between CT10 to CT14. Phosphorylation at Ser-90 by CK2 is essential for its nuclear localization, its interaction with CLOCK and controls CLOCK nuclear entry. Dephosphorylation at Ser-78 is important for dimerization with CLOCK and transcriptional activity. Post-translationally, sumoylated on Lys-259 upon dimerization with CLOCK. Predominantly conjugated to poly-SUMO2/3 rather than SUMO1 and the level of these conjugates undergo rhythmic variation, peaking at CT9-CT12. Sumoylation localizes it exclusively to the PML body and promotes its ubiquitination in the PML body, ubiquitin-dependent proteasomal degradation and the transcriptional activity of the CLOCK-BMAL1 heterodimer. Undergoes lysosome-mediated degradation in a time-dependent manner in the liver.

The protein resides in the nucleus. It is found in the cytoplasm. The protein localises to the PML body. In terms of biological role, transcriptional activator which forms a core component of the circadian clock. The circadian clock, an internal time-keeping system, regulates various physiological processes through the generation of approximately 24 hour circadian rhythms in gene expression, which are translated into rhythms in metabolism and behavior. It is derived from the Latin roots 'circa' (about) and 'diem' (day) and acts as an important regulator of a wide array of physiological functions including metabolism, sleep, body temperature, blood pressure, endocrine, immune, cardiovascular, and renal function. Consists of two major components: the central clock, residing in the suprachiasmatic nucleus (SCN) of the brain, and the peripheral clocks that are present in nearly every tissue and organ system. Both the central and peripheral clocks can be reset by environmental cues, also known as Zeitgebers (German for 'timegivers'). The predominant Zeitgeber for the central clock is light, which is sensed by retina and signals directly to the SCN. The central clock entrains the peripheral clocks through neuronal and hormonal signals, body temperature and feeding-related cues, aligning all clocks with the external light/dark cycle. Circadian rhythms allow an organism to achieve temporal homeostasis with its environment at the molecular level by regulating gene expression to create a peak of protein expression once every 24 hours to control when a particular physiological process is most active with respect to the solar day. Transcription and translation of core clock components (CLOCK, NPAS2, BMAL1, BMAL2, PER1, PER2, PER3, CRY1 and CRY2) plays a critical role in rhythm generation, whereas delays imposed by post-translational modifications (PTMs) are important for determining the period (tau) of the rhythms (tau refers to the period of a rhythm and is the length, in time, of one complete cycle). A diurnal rhythm is synchronized with the day/night cycle, while the ultradian and infradian rhythms have a period shorter and longer than 24 hours, respectively. Disruptions in the circadian rhythms contribute to the pathology of cardiovascular diseases, cancer, metabolic syndromes and aging. A transcription/translation feedback loop (TTFL) forms the core of the molecular circadian clock mechanism. Transcription factors, CLOCK or NPAS2 and BMAL1 or BMAL2, form the positive limb of the feedback loop, act in the form of a heterodimer and activate the transcription of core clock genes and clock-controlled genes (involved in key metabolic processes), harboring E-box elements (5'-CACGTG-3') within their promoters. The core clock genes: PER1/2/3 and CRY1/2 which are transcriptional repressors form the negative limb of the feedback loop and interact with the CLOCK|NPAS2-BMAL1|BMAL2 heterodimer inhibiting its activity and thereby negatively regulating their own expression. This heterodimer also activates nuclear receptors NR1D1, NR1D2, RORA, RORB and RORG, which form a second feedback loop and which activate and repress BMAL1 transcription, respectively. BMAL1 positively regulates myogenesis and negatively regulates adipogenesis via the transcriptional control of the genes of the canonical Wnt signaling pathway. Plays a role in normal pancreatic beta-cell function; regulates glucose-stimulated insulin secretion via the regulation of antioxidant genes NFE2L2/NRF2 and its targets SESN2, PRDX3, CCLC and CCLM. Negatively regulates the mTORC1 signaling pathway; regulates the expression of MTOR and DEPTOR. Controls diurnal oscillations of Ly6C inflammatory monocytes; rhythmic recruitment of the PRC2 complex imparts diurnal variation to chemokine expression that is necessary to sustain Ly6C monocyte rhythms. Regulates the expression of HSD3B2, STAR, PTGS2, CYP11A1, CYP19A1 and LHCGR in the ovary and also the genes involved in hair growth. Plays an important role in adult hippocampal neurogenesis by regulating the timely entry of neural stem/progenitor cells (NSPCs) into the cell cycle and the number of cell divisions that take place prior to cell-cycle exit. Regulates the circadian expression of CIART. The CLOCK-BMAL1 heterodimer regulates the circadian expression of SERPINE1/PAI1, VWF, B3, CCRN4L/NOC, NAMPT, DBP, MYOD1, PPARGC1A, PPARGC1B, SIRT1, GYS2, F7, NGFR, GNRHR, BHLHE40/DEC1, ATF4, MTA1 and also genes implicated in glucose and lipid metabolism. Promotes rhythmic chromatin opening, regulating the DNA accessibility of other transcription factors. The NPAS2-BMAL1 heterodimer positively regulates the expression of MAOA, F7 and LDHA and modulates the circadian rhythm of daytime contrast sensitivity by regulating the rhythmic expression of adenylate cyclase type 1 (ADCY1) in the retina. The preferred binding motif for the CLOCK-BMAL1 heterodimer is 5'-CACGTGA-3', which contains a flanking adenine nucleotide at the 3-prime end of the canonical 6-nucleotide E-box sequence. CLOCK specifically binds to the half-site 5'-CAC-3', while BMAL1 binds to the half-site 5'-GTGA-3'. The CLOCK-BMAL1 heterodimer also recognizes the non-canonical E-box motifs 5'-AACGTGA-3' and 5'-CATGTGA-3'. Essential for the rhythmic interaction of CLOCK with ASS1 and plays a critical role in positively regulating CLOCK-mediated acetylation of ASS1. Plays a role in protecting against lethal sepsis by limiting the expression of immune checkpoint protein CD274 in macrophages in a PKM2-dependent manner. Regulates the diurnal rhythms of skeletal muscle metabolism via transcriptional activation of genes promoting triglyceride synthesis (DGAT2) and metabolic efficiency (COQ10B). The polypeptide is Basic helix-loop-helix ARNT-like protein 1 (BMAL1) (Equus caballus (Horse)).